Here is a 417-residue protein sequence, read N- to C-terminus: UDP-N-acetylmuramoylalanine--D-glutamate ligase (417 aa).

108–114 (GSNGKTT) provides a ligand contact to ATP.

It belongs to the MurCDEF family.

It is found in the cytoplasm. The catalysed reaction is UDP-N-acetyl-alpha-D-muramoyl-L-alanine + D-glutamate + ATP = UDP-N-acetyl-alpha-D-muramoyl-L-alanyl-D-glutamate + ADP + phosphate + H(+). Its pathway is cell wall biogenesis; peptidoglycan biosynthesis. In terms of biological role, cell wall formation. Catalyzes the addition of glutamate to the nucleotide precursor UDP-N-acetylmuramoyl-L-alanine (UMA). The sequence is that of UDP-N-acetylmuramoylalanine--D-glutamate ligase from Chlamydia pneumoniae (Chlamydophila pneumoniae).